A 439-amino-acid chain; its full sequence is Transcription factor pydF (439 aa).

The segment covering 1–18 has biased composition (basic and acidic residues); sequence MGRPQRADKQRRETDGPQ. Disordered stretches follow at residues 1 to 53, 143 to 177, and 239 to 262; these read MGRP…GYAR, HVEK…QAVE, and AFRD…MQQH. Residues 20 to 35 show a composition bias toward polar residues; sequence SRPSLTQAQKNSTTIR. The span at 143–153 shows a compositional bias: basic and acidic residues; it reads HVEKATAERPG. Over residues 157–172 the composition is skewed to low complexity; sequence SSSPSSSLLRTSSSPS. Residues 243-260 show a composition bias toward polar residues; the sequence is GQNNGTSRPNTAASQNMQ.

Its subcellular location is the nucleus. In terms of biological role, transcription factor; part of the gene cluster that mediates the biosynthesis of pyrrocidines, fungal natural products containing a macrocyclic para-cyclophane connected to a decahydrofluorene ring system that show potent antibiotic activities toward Gram-negative bacteria. The polypeptide is Transcription factor pydF (Acremonium sp).